We begin with the raw amino-acid sequence, 345 residues long: tRNA N6-adenosine threonylcarbamoyltransferase (345 aa).

The Fe cation site is built by H111 and H115. Substrate contacts are provided by residues 134–138, D167, G180, and N276; that span reads LVSGG. Position 304 (D304) interacts with Fe cation.

The protein belongs to the KAE1 / TsaD family. Fe(2+) serves as cofactor.

The protein localises to the cytoplasm. The catalysed reaction is L-threonylcarbamoyladenylate + adenosine(37) in tRNA = N(6)-L-threonylcarbamoyladenosine(37) in tRNA + AMP + H(+). Functionally, required for the formation of a threonylcarbamoyl group on adenosine at position 37 (t(6)A37) in tRNAs that read codons beginning with adenine. Is involved in the transfer of the threonylcarbamoyl moiety of threonylcarbamoyl-AMP (TC-AMP) to the N6 group of A37, together with TsaE and TsaB. TsaD likely plays a direct catalytic role in this reaction. This Alcanivorax borkumensis (strain ATCC 700651 / DSM 11573 / NCIMB 13689 / SK2) protein is tRNA N6-adenosine threonylcarbamoyltransferase.